The primary structure comprises 278 residues: Protein Rv2133c (278 aa).

The chain is Protein Rv2133c from Mycobacterium tuberculosis (strain ATCC 25618 / H37Rv).